Reading from the N-terminus, the 110-residue chain is Glutaredoxin-2 (110 aa).

Residues 6–106 (KAFVEKAISN…KMIAELKENK (101 aa)) form the Glutaredoxin domain. An intrachain disulfide couples C26 to C29.

This sequence belongs to the glutaredoxin family.

The disulfide bond functions as an electron carrier in the glutathione-dependent synthesis of deoxyribonucleotides by the enzyme ribonucleotide reductase. In addition, it is also involved in reducing some disulfides in a coupled system with glutathione reductase. Thioltransferase catalyzes cellular thiol-disulfide transhydrogenation reactions. It transfers reducing equivalents to cytosolic protein and nonprotein disulfides. The chain is Glutaredoxin-2 (grx2) from Schizosaccharomyces pombe (strain 972 / ATCC 24843) (Fission yeast).